A 145-amino-acid chain; its full sequence is Small ribosomal subunit protein uS9 (145 aa).

It belongs to the universal ribosomal protein uS9 family.

The protein resides in the cytoplasm. In Fritillaria agrestis (Stinkbells), this protein is Small ribosomal subunit protein uS9 (RPS16).